The sequence spans 62 residues: Large ribosomal subunit protein uL30 (62 aa).

Belongs to the universal ribosomal protein uL30 family. As to quaternary structure, part of the 50S ribosomal subunit.

The protein is Large ribosomal subunit protein uL30 of Marinobacter nauticus (strain ATCC 700491 / DSM 11845 / VT8) (Marinobacter aquaeolei).